A 431-amino-acid chain; its full sequence is Tol-Pal system protein TolB (431 aa).

The first 26 residues, 1 to 26 (MRLMTKLGFRALVASCLIAAGAAANA), serve as a signal peptide directing secretion. Residues 411–431 (PQILSVQGGSVREPSWGPFMQ) are disordered.

This sequence belongs to the TolB family. In terms of assembly, the Tol-Pal system is composed of five core proteins: the inner membrane proteins TolA, TolQ and TolR, the periplasmic protein TolB and the outer membrane protein Pal. They form a network linking the inner and outer membranes and the peptidoglycan layer.

The protein resides in the periplasm. In terms of biological role, part of the Tol-Pal system, which plays a role in outer membrane invagination during cell division and is important for maintaining outer membrane integrity. This Burkholderia ambifaria (strain ATCC BAA-244 / DSM 16087 / CCUG 44356 / LMG 19182 / AMMD) (Burkholderia cepacia (strain AMMD)) protein is Tol-Pal system protein TolB.